Here is a 248-residue protein sequence, read N- to C-terminus: Cyclin-Q (248 aa).

At Met-1 the chain carries N-acetylmethionine. Gly residues predominate over residues 1–12 (MEAPEGGGGGPA). The segment at 1–21 (MEAPEGGGGGPAARGPEGQPA) is disordered.

It belongs to the cyclin family. Cyclin-like FAM58 subfamily. In terms of assembly, associates with CDK10 to promote its kinase activity. Interacts with SALL1.

Its function is as follows. Activating cyclin for the cyclin-associated kinase CDK10. The chain is Cyclin-Q from Homo sapiens (Human).